Reading from the N-terminus, the 2426-residue chain is MATNIEQIFRSFVVSKFREIQQELSSGRNEGQLNGETNTPIEGNQAGDAAASARSLPNEEIVQKIEEVLSGVLDTELRYKPDLKEGSRKSRCVSVQTDPTDEIPTKKSKKHKKHKNKKKKKKKEKEKKYKRQPEESESKTKSHDDGNIDLESDSFLKFDSEPSAVALELPTRAFGPSETNESPAVVLEPPVVSMEVSEPHILETLKPATKTAELSVVSTSVISEQSEQSVAVMPEPSMTKILDSFAAAPVPTTTLVLKSSEPVVTMSVEYQMKSVLKSVESTSPEPSKIMLVEPPVAKVLEPSETLVVSSETPTEVYPEPSTSTTMDFPESSAIEALRLPEQPVDVPSEIADSSMTRPQELPELPKTTALELQESSVASAMELPGPPATSMPELQGPPVTPVLELPGPSATPVPELPGPLSTPVPELPGPPATAVPELPGPSVTPVPQLSQELPGLPAPSMGLEPPQEVPEPPVMAQELPGLPLVTAAVELPEQPAVTVAMELTEQPVTTTELEQPVGMTTVEHPGHPEVTTATGLLGQPEATMVLELPGQPVATTALELPGQPSVTGVPELPGLPSATRALELSGQPVATGALELPGPLMAAGALEFSGQSGAAGALELLGQPLATGVLELPGQPGAPELPGQPVATVALEISVQSVVTTSELSTMTVSQSLEVPSTTALESYNTVAQELPTTLVGETSVTVGVDPLMAPESHILASNTMETHILASNTMDSQMLASNTMDSQMLASNTMDSQMLASSTMDSQMLATSSMDSQMLATSSMDSQMLATSTMDSQMLATSSMDSQMLATSSMDSQMLATSSMDSQMLATSSMDSQMLATSTMDSQMLATSTMDSQMLATSSMDSQMLASGTMDSQMLASGTMDAQMLASGTMDAQMLASSTQDSAMLGSKSPDPYRLAQDPYRLAQDPYRLGHDPYRLGHDAYRLGQDPYRLGHDPYRLTPDPYRMSPRPYRIAPRSYRIAPRPYRLAPRPLMLASRRSMMMSYAAERSMMSSYERSMMSYERSMMSPMAERSMMSAYERSMMSAYERSMMSPMAERSMMSAYERSMMSAYERSMMSPMADRSMMSMGADRSMMSSYSAADRSMMSSYSAADRSMMSSYTADRSMMSMAADSYTDSYTDTYTEAYMVPPLPPEEPPTMPPLPPEEPPMTPPLPPEEPPEGPALPTEQSALTAENTWPTEVPSSPSEESVSQPEPPVSQSEISEPSAVPTDYSVSASDPSVLVSEAAVTVPEPPPEPESSITLTPVESAVVAEEHEVVPERPVTCMVSETPAMSAEPTVLASEPPVMSETAETFDSMRASGHVASEVSTSLLVPAVTTPVLAESILEPPAMAAPESSAMAVLESSAVTVLESSTVTVLESSTVTVLEPSVVTVPEPPVVAEPDYVTIPVPVVSALEPSVPVLEPAVSVLQPSMIVSEPSVSVQESTVTVSEPAVTVSEQTQVIPTEVAIESTPMILESSIMSSHVMKGINLSSGDQNLAPEIGMQEIALHSGEEPHAEEHLKGDFYESEHGINIDLNINNHLIAKEMEHNTVCAAGTSPVGEIGEEKILPTSETKQRTVLDTYPGVSEADAGETLSSTGPFALEPDATGTSKGIEFTTASTLSLVNKYDVDLSLTTQDTEHDMVISTSPSGGSEADIEGPLPAKDIHLDLPSNNNLVSKDTEEPLPVKESDQTLAALLSPKESSGGEKEVPPPPKETLPDSGFSANIEDINEADLVRPLLPKDMERLTSLRAGIEGPLLASDVGRDRSAASPVVSSMPERASESSSEEKDDYEIFVKVKDTHEKSKKNKNRDKGEKEKKRDSSLRSRSKRSKSSEHKSRKRTSESRSRARKRSSKSKSHRSQTRSRSRSRRRRRSSRSRSKSRGRRSVSKEKRKRSPKHRSKSRERKRKRSSSRDNRKTVRARSRTPSRRSRSHTPSRRRRSRSVGRRRSFSISPSRRSRTPSRRSRTPSRRSRTPSRRSRTPSRRSRTPSRRSRTPSRRRRSRSVVRRRSFSISPVRLRRSRTPLRRRFSRSPIRRKRSRSSERGRSPKRLTDLDKAQLLEIAKANAAAMCAKAGVPLPPNLKPAPPPTIEEKVAKKSGGATIEELTEKCKQIAQSKEDDDVIVNKPHVSDEEEEEPPFYHHPFKLSEPKPIFFNLNIAAAKPTPPKSQVTLTKEFPVSSGSQHRKKEADSVYGEWVPVEKNGEENKDDDNVFSSNLPSEPVDISTAMSERALAQKRLSENAFDLEAMSMLNRAQERIDAWAQLNSIPGQFTGSTGVQVLTQEQLANTGAQAWIKKDQFLRAAPVTGGMGAVLMRKMGWREGEGLGKNKEGNKEPILVDFKTDRKGLVAVGERAQKRSGNFSAAMKDLSGKHPVSALMEICNKRRWQPPEFLLVHDSGPDHRKHFLFRVLRNGALTRPNCMFFLNRY.

N-acetylalanine is present on Ala-2. Residue Lys-16 is modified to N6-acetyllysine. The segment covering 24-42 (LSSGRNEGQLNGETNTPIE) has biased composition (polar residues). Residues 24–56 (LSSGRNEGQLNGETNTPIEGNQAGDAAASARSL) form a disordered region. Lys-64 is covalently cross-linked (Glycyl lysine isopeptide (Lys-Gly) (interchain with G-Cter in SUMO2)). The segment covering 77–88 (LRYKPDLKEGSR) has biased composition (basic and acidic residues). The interval 77–155 (LRYKPDLKEG…GNIDLESDSF (79 aa)) is disordered. Ser-94 is subject to Phosphoserine. The span at 106-130 (KKSKKHKKHKNKKKKKKKEKEKKYK) shows a compositional bias: basic residues. The span at 131 to 146 (RQPEESESKTKSHDDG) shows a compositional bias: basic and acidic residues. Phosphoserine is present on residues Ser-142, Ser-152, Ser-154, Ser-160, and Ser-283. An N6-acetyllysine modification is found at Lys-288. Residues 305–328 (TLVVSSETPTEVYPEPSTSTTMDF) are disordered. Position 400 is a phosphothreonine (Thr-400). A disordered region spans residues 406–442 (PGPSATPVPELPGPLSTPVPELPGPPATAVPELPGPS). The span at 409 to 442 (SATPVPELPGPLSTPVPELPGPPATAVPELPGPS) shows a compositional bias: pro residues. A 17 X 10 AA tandem repeats of L-A-[ST]-[NSG]-[TS]-MDSQM region spans residues 726–895 (LASNTMDSQM…LASGTMDAQM (170 aa)). The interval 912 to 988 (DPYRLAQDPY…IAPRPYRLAP (77 aa)) is 11 X 7 AA tandem repeats of [DR]-P-Y-R-[LI][AG][QHP]. Arg-950 is subject to Omega-N-methylarginine. A Phosphothreonine modification is found at Thr-959. Residue Ser-998 is modified to Phosphoserine. 14 repeat units span residues 1006-1011 (ERSMMS), 1014-1019 (ERSMMS), 1021-1026 (ERSMMS), 1030-1035 (ERSMMS), 1038-1043 (ERSMMS), 1046-1051 (ERSMMS), 1055-1060 (ERSMMS), 1063-1068 (ERSMMS), 1071-1076 (ERSMMS), 1080-1085 (DRSMMS), 1089-1094 (DRSMMS), 1100-1105 (DRSMMS), 1111-1116 (DRSMMS), and 1121-1126 (DRSMMS). The 14 X 6 AA repeats of [ED]-R-S-M-M-S stretch occupies residues 1006 to 1126 (ERSMMSSYER…SYTADRSMMS (121 aa)). Arg-1007 bears the Asymmetric dimethylarginine mark. Arg-1022 is subject to Asymmetric dimethylarginine. Phosphoserine is present on residues Ser-1035 and Ser-1043. Phosphoserine is present on residues Ser-1060 and Ser-1068. Ser-1082 bears the Phosphoserine mark. The interval 1144–1236 (YMVPPLPPEE…PTDYSVSASD (93 aa)) is disordered. The segment at 1147–1179 (PPLPPEEPPTMPPLPPEEPPMTPPLPPEEPPEG) is 3 X 11 AA tandem repats of P-P-L-P-P-E-E-P-P-[TME]-[MTG]. Residues 1147–1180 (PPLPPEEPPTMPPLPPEEPPMTPPLPPEEPPEGP) are compositionally biased toward pro residues. The segment covering 1186–1196 (QSALTAENTWP) has biased composition (polar residues). Residues 1198 to 1224 (EVPSSPSEESVSQPEPPVSQSEISEPS) show a composition bias toward low complexity. The tract at residues 1359–1390 (VLESSAVTVLESSTVTVLESSTVTVLEPSVVT) is 4 X 8 AA tandem repeats of V-L-E-SS-[AVT]-VT. A phosphoserine mark is found at Ser-1556 and Ser-1651. Residues 1645 to 1722 (TSPSGGSEAD…KETLPDSGFS (78 aa)) are disordered. A compositionally biased stretch (basic and acidic residues) spans 1677-1689 (KDTEEPLPVKESD). Ser-1697, Ser-1701, Ser-1747, Ser-1759, Ser-1766, Ser-1769, Ser-1782, and Ser-1783 each carry phosphoserine. Positions 1754–2054 (GPLLASDVGR…RSPKRLTDLD (301 aa)) are disordered. 3 stretches are compositionally biased toward basic and acidic residues: residues 1790–1801 (YEIFVKVKDTHE), 1809–1822 (RDKG…DSSL), and 1830–1845 (KSSE…ESRS). Basic residues-rich tracts occupy residues 1846–1909 (RARK…RKRS) and 1917–1948 (TVRA…RRRS). 9 repeat units span residues 1925 to 1931 (PSRRSRS), 1934 to 1952 (PSRR…FSIS), 1953 to 1959 (PSRRSRT), 1960 to 1966 (PSRRSRT), 1967 to 1973 (PSRRSRT), 1974 to 1980 (PSRRSRT), 1981 to 1987 (PSRRSRT), 1988 to 1994 (PSRRSRT), and 1995 to 2013 (PSRR…FSIS). A 7 X 7 AA repeats of P-S-R-R-S-R-[TS] region spans residues 1925–1994 (PSRRSRSHTP…SRTPSRRSRT (70 aa)). Residues 1934 to 2013 (PSRRRRSRSV…VVRRRSFSIS (80 aa)) form a 2 X 19 AA repeats of P-S-R-R-R-R-S-R-S-V-V-R-R-R-S-F-S-I-S region. A phosphoserine mark is found at Ser-1948, Ser-1950, and Ser-1952. Residues 1955–2009 (RRSRTPSRRSRTPSRRSRTPSRRSRTPSRRSRTPSRRSRTPSRRRRSRSVVRRRS) show a composition bias toward basic residues. Phosphoserine is present on residues Ser-2009, Ser-2011, Ser-2013, Ser-2029, and Ser-2031. The segment at 2013-2039 (SPVRLRRSRTPLRRRFSRSPIRRKRSR) is 3 X tandem repeats of [ST]-P-[VLI]-R-[RL]-[RK]-[RF]-S-R. Basic residues predominate over residues 2016 to 2038 (RLRRSRTPLRRRFSRSPIRRKRS). Residues 2039-2054 (RSSERGRSPKRLTDLD) show a composition bias toward basic and acidic residues. Lys-2055 bears the N6-acetyllysine; alternate mark. Lys-2055 is covalently cross-linked (Glycyl lysine isopeptide (Lys-Gly) (interchain with G-Cter in SUMO2); alternate). Lys-2092 participates in a covalent cross-link: Glycyl lysine isopeptide (Lys-Gly) (interchain with G-Cter in SUMO2). Phosphoserine is present on Ser-2129. Lys-2149 participates in a covalent cross-link: Glycyl lysine isopeptide (Lys-Gly) (interchain with G-Cter in SUMO2). Thr-2163 carries the phosphothreonine modification. A disordered region spans residues 2200–2220 (KNGEENKDDDNVFSSNLPSEP). Ser-2238 is modified (phosphoserine). Positions 2305-2351 (TGGMGAVLMRKMGWREGEGLGKNKEGNKEPILVDFKTDRKGLVAVGE) constitute a G-patch domain. Residues 2371-2426 (HPVSALMEICNKRRWQPPEFLLVHDSGPDHRKHFLFRVLRNGALTRPNCMFFLNRY) form the DRBM domain.

As to quaternary structure, interacts with SRSF2. Associates with the spliceosome. Interacts with the AML1-MTG8 (AML1-ETO) fusion protein, possibly leading to trigger signals inhibiting leukemogenesis. Interacts with USH1G. In terms of tissue distribution, widely expressed, with the higher expression seen in leukocyte and heart.

Its subcellular location is the nucleus speckle. Functionally, RNA-binding protein that acts as a mRNA splicing cofactor by promoting efficient splicing of transcripts that possess weak splice sites. Specifically promotes splicing of many cell-cycle and DNA-repair transcripts that possess weak splice sites, such as TUBG1, KATNB1, TUBGCP2, AURKB, PCNT, AKT1, RAD23A, and FANCG. Probably acts by facilitating the interaction between Serine/arginine-rich proteins such as SRSF2 and the RNA polymerase II. Also binds to DNA; binds to the consensus DNA sequence: 5'-GA[GT]AN[CG][AG]CC-3'. May indirectly repress hepatitis B virus (HBV) core promoter activity and transcription of HBV genes and production of HBV virions. Essential for correct RNA splicing of multiple genes critical for brain development, neuronal migration and metabolism, including TUBG1, FLNA, PNKP, WDR62, PSMD3, PCK2, PFKL, IDH2, and ACY1. This Homo sapiens (Human) protein is Protein SON (SON).